A 98-amino-acid polypeptide reads, in one-letter code: Acylphosphatase (98 aa).

Positions 12 to 98 (RLSAWVHGHV…DATMTGFSER (87 aa)) constitute an Acylphosphatase-like domain. Catalysis depends on residues R27 and N45.

Belongs to the acylphosphatase family.

The enzyme catalyses an acyl phosphate + H2O = a carboxylate + phosphate + H(+). In Mycolicibacterium smegmatis (strain ATCC 700084 / mc(2)155) (Mycobacterium smegmatis), this protein is Acylphosphatase (acyP).